Reading from the N-terminus, the 210-residue chain is Probable GTP-binding protein EngB (210 aa).

Residues 30–204 enclose the EngB-type G domain; sequence QGYEVAFAGR…YRVLADWMEL (175 aa). GTP is bound by residues 38–45, 64–68, 82–85, 149–152, and 182–185; these read GRSNAGKS, GRTQL, DLPG, TKAD, and LFSA. Mg(2+)-binding residues include serine 45 and threonine 66.

Belongs to the TRAFAC class TrmE-Era-EngA-EngB-Septin-like GTPase superfamily. EngB GTPase family. Mg(2+) serves as cofactor.

Functionally, necessary for normal cell division and for the maintenance of normal septation. The polypeptide is Probable GTP-binding protein EngB (Pseudomonas entomophila (strain L48)).